A 389-amino-acid chain; its full sequence is Phospho-N-acetylmuramoyl-pentapeptide-transferase (389 aa).

The next 10 helical transmembrane spans lie at 25–45 (RAVM…PWVI), 73–93 (TMGG…WADL), 97–117 (FIWI…VDDY), 135–155 (FWQT…VSEI), 190–210 (VSYP…IVGS), 222–242 (GLVI…AYVM), 258–278 (GAGE…AFLW), 286–306 (VFMG…IAVI), 311–331 (IVLF…MMQV), and 366–386 (QVVV…LSSL).

The protein belongs to the glycosyltransferase 4 family. MraY subfamily. The cofactor is Mg(2+).

The protein resides in the cell inner membrane. It catalyses the reaction UDP-N-acetyl-alpha-D-muramoyl-L-alanyl-gamma-D-glutamyl-meso-2,6-diaminopimeloyl-D-alanyl-D-alanine + di-trans,octa-cis-undecaprenyl phosphate = di-trans,octa-cis-undecaprenyl diphospho-N-acetyl-alpha-D-muramoyl-L-alanyl-D-glutamyl-meso-2,6-diaminopimeloyl-D-alanyl-D-alanine + UMP. The protein operates within cell wall biogenesis; peptidoglycan biosynthesis. In terms of biological role, catalyzes the initial step of the lipid cycle reactions in the biosynthesis of the cell wall peptidoglycan: transfers peptidoglycan precursor phospho-MurNAc-pentapeptide from UDP-MurNAc-pentapeptide onto the lipid carrier undecaprenyl phosphate, yielding undecaprenyl-pyrophosphoryl-MurNAc-pentapeptide, known as lipid I. The protein is Phospho-N-acetylmuramoyl-pentapeptide-transferase of Polynucleobacter asymbioticus (strain DSM 18221 / CIP 109841 / QLW-P1DMWA-1) (Polynucleobacter necessarius subsp. asymbioticus).